The sequence spans 399 residues: tRNA-specific 2-thiouridylase MnmA (399 aa).

ATP contacts are provided by residues 7–14 (AMSGGVDS) and M33. The Nucleophile role is filled by C128. A disulfide bridge connects residues C128 and C224. G152 lines the ATP pocket. The interaction with tRNA stretch occupies residues 174 to 176 (KDQ). Catalysis depends on C224, which acts as the Cysteine persulfide intermediate. Positions 333–334 (RY) are interaction with tRNA.

Belongs to the MnmA/TRMU family.

Its subcellular location is the cytoplasm. The catalysed reaction is S-sulfanyl-L-cysteinyl-[protein] + uridine(34) in tRNA + AH2 + ATP = 2-thiouridine(34) in tRNA + L-cysteinyl-[protein] + A + AMP + diphosphate + H(+). In terms of biological role, catalyzes the 2-thiolation of uridine at the wobble position (U34) of tRNA, leading to the formation of s(2)U34. The protein is tRNA-specific 2-thiouridylase MnmA of Rhodopirellula baltica (strain DSM 10527 / NCIMB 13988 / SH1).